Consider the following 163-residue polypeptide: Mediator of RNA polymerase II transcription subunit 10 (163 aa).

The interval 57–79 (AAPDPSYVQSPPSRTGLSPADPP) is disordered. Over residues 63-72 (YVQSPPSRTG) the composition is skewed to polar residues.

The protein belongs to the Mediator complex subunit 10 family. In terms of assembly, component of the Mediator complex.

Its subcellular location is the nucleus. Its function is as follows. Component of the Mediator complex, a coactivator involved in the regulated transcription of nearly all RNA polymerase II-dependent genes. Mediator functions as a bridge to convey information from gene-specific regulatory proteins to the basal RNA polymerase II transcription machinery. Mediator is recruited to promoters by direct interactions with regulatory proteins and serves as a scaffold for the assembly of a functional preinitiation complex with RNA polymerase II and the general transcription factors. This is Mediator of RNA polymerase II transcription subunit 10 (NUT2) from Coccidioides immitis (strain RS) (Valley fever fungus).